We begin with the raw amino-acid sequence, 480 residues long: Uridine 5'-monophosphate synthase (480 aa).

The residue at position 2 (Ala2) is an N-acetylalanine. Residues 2-214 (AAADALLGSL…AFVAANPNDS (213 aa)) form an OPRTase region. A Phosphotyrosine modification is found at Tyr37. At Ser214 the chain carries Phosphoserine. Positions 215–220 (LPSVKK) are domain linker. An OMPdecase region spans residues 221–480 (EPKELSFGAR…WEAYLSRLAV (260 aa)). Ser257 is a binding site for orotidine 5'-phosphate. Residues Ser257, Asp259, and 281 to 283 (KIH) each bind UMP. Orotidine 5'-phosphate-binding positions include Lys281, Lys314, Asp317, Thr321, Ser372, 430–432 (QQY), and 450–451 (GR). Active-site for OMPdecase activity residues include Lys314 and Asp317. UMP contacts are provided by residues Asp317, Thr321, Ser372, 430-432 (QQY), and 450-451 (GR).

It in the N-terminal section; belongs to the purine/pyrimidine phosphoribosyltransferase family. In the C-terminal section; belongs to the OMP decarboxylase family. Homodimer; dimerization is required for enzymatic activity.

It carries out the reaction orotidine 5'-phosphate + diphosphate = orotate + 5-phospho-alpha-D-ribose 1-diphosphate. It catalyses the reaction orotidine 5'-phosphate + H(+) = UMP + CO2. It participates in pyrimidine metabolism; UMP biosynthesis via de novo pathway; UMP from orotate: step 1/2. It functions in the pathway pyrimidine metabolism; UMP biosynthesis via de novo pathway; UMP from orotate: step 2/2. Its function is as follows. Bifunctional enzyme catalyzing the last two steps of de novo pyrimidine biosynthesis, orotate phosphoribosyltransferase (OPRT), which converts orotate to orotidine-5'-monophosphate (OMP), and orotidine-5'-monophosphate decarboxylase (ODC), the terminal enzymatic reaction that decarboxylates OMP to uridine monophosphate (UMP). This Bos taurus (Bovine) protein is Uridine 5'-monophosphate synthase (UMPS).